Here is a 152-residue protein sequence, read N- to C-terminus: Nucleoside diphosphate kinase B (152 aa).

An interaction with AKAP13 region spans residues M1 to K66. Positions 12, 60, 88, 94, 105, and 115 each coordinate ATP. Catalysis depends on H118, which acts as the Pros-phosphohistidine intermediate.

It belongs to the NDK family. In terms of assembly, hexamer of two different chains: An and B (A6, A5B, A4B2, A3B3, A2B4, AB5, B6). Interacts with CAPN8. Interacts with AKAP13. Interacts with ITGB1BP1 (via C-terminal domain region). Interacts with BCL2L10. Requires Mg(2+) as cofactor. In terms of processing, the N-terminus is blocked.

It is found in the cytoplasm. The protein localises to the cell projection. The protein resides in the lamellipodium. It localises to the ruffle. Its subcellular location is the nucleus. The catalysed reaction is a 2'-deoxyribonucleoside 5'-diphosphate + ATP = a 2'-deoxyribonucleoside 5'-triphosphate + ADP. The enzyme catalyses a ribonucleoside 5'-diphosphate + ATP = a ribonucleoside 5'-triphosphate + ADP. It catalyses the reaction ATP + protein L-histidine = ADP + protein N-phospho-L-histidine.. Functionally, major role in the synthesis of nucleoside triphosphates other than ATP. The ATP gamma phosphate is transferred to the NDP beta phosphate via a ping-pong mechanism, using a phosphorylated active-site intermediate. Negatively regulates Rho activity by interacting with AKAP13/LBC. Acts as a transcriptional activator of the MYC gene; binds DNA non-specifically. Binds to both single-stranded guanine- and cytosine-rich strands within the nuclease hypersensitive element (NHE) III(1) region of the MYC gene promoter. Does not bind to duplex NHE III(1). Has G-quadruplex (G4) DNA-binding activity, which is independent of its nucleotide-binding and kinase activity. Binds both folded and unfolded G4 with similar low nanomolar affinities. Stabilizes folded G4s regardless of whether they are prefolded or not. Exhibits histidine protein kinase activity. The protein is Nucleoside diphosphate kinase B (Nme2) of Rattus norvegicus (Rat).